A 65-amino-acid chain; its full sequence is Protein translocase subunit SecE (65 aa).

Over 1-34 (MEKLRKFFREVIAEAKKISWPSRKELLTSFGVVL) the chain is Cytoplasmic. Residues 35–51 (VILAVTSVYFFVLDFIF) traverse the membrane as a helical segment. The Extracellular segment spans residues 52–65 (SGVVSAIFKALGIG).

Belongs to the SecE/SEC61-gamma family. In terms of assembly, component of the Sec protein translocase complex. Heterotrimer consisting of SecY, SecE and SecG subunits. The heterotrimers can form oligomers, although 1 heterotrimer is thought to be able to translocate proteins. Interacts with SecDF, and other proteins may be involved. The channel interacts with SecA via subunit SecY.

Its subcellular location is the cell inner membrane. Its function is as follows. Essential subunit of the protein translocation channel SecYEG. Clamps together the 2 halves of SecY. May contact the channel plug during translocation. This is Protein translocase subunit SecE from Thermotoga maritima (strain ATCC 43589 / DSM 3109 / JCM 10099 / NBRC 100826 / MSB8).